The chain runs to 112 residues: Protein ECM19 (112 aa).

Residues 35 to 57 (NTLDMVTIGIACLVGVYTGTRFF) form a helical membrane-spanning segment. The tract at residues 82–112 (EDGNLLKVTPSLSSTPAAPPTPPTPPTPPQQ) is disordered. The segment covering 98–112 (AAPPTPPTPPTPPQQ) has biased composition (pro residues).

It is found in the mitochondrion membrane. May be involved in cell wall organization and biogenesis. This chain is Protein ECM19 (ECM19), found in Saccharomyces cerevisiae (strain ATCC 204508 / S288c) (Baker's yeast).